The sequence spans 86 residues: Large ribosomal subunit protein bL27 (86 aa).

Positions 1-10 (MAQKKGGGST) are enriched in gly residues. The interval 1-21 (MAQKKGGGSTRNGRDSESKRL) is disordered.

It belongs to the bacterial ribosomal protein bL27 family.

The chain is Large ribosomal subunit protein bL27 from Ralstonia nicotianae (strain ATCC BAA-1114 / GMI1000) (Ralstonia solanacearum).